The primary structure comprises 243 residues: tRNA1(Val) (adenine(37)-N6)-methyltransferase (243 aa).

It belongs to the methyltransferase superfamily. tRNA (adenine-N(6)-)-methyltransferase family.

Its subcellular location is the cytoplasm. The enzyme catalyses adenosine(37) in tRNA1(Val) + S-adenosyl-L-methionine = N(6)-methyladenosine(37) in tRNA1(Val) + S-adenosyl-L-homocysteine + H(+). Functionally, specifically methylates the adenine in position 37 of tRNA(1)(Val) (anticodon cmo5UAC). In Shewanella loihica (strain ATCC BAA-1088 / PV-4), this protein is tRNA1(Val) (adenine(37)-N6)-methyltransferase.